A 563-amino-acid polypeptide reads, in one-letter code: GTPase Obg (563 aa).

Residues 2–168 (SDFVDRVTVH…RDVILELKSI (167 aa)) enclose the Obg domain. The OBG-type G domain maps to 169–349 (ADVALVGFPS…LNFALSALVH (181 aa)). GTP contacts are provided by residues 175-182 (GFPSAGKS), 200-204 (FTTLV), 221-224 (DVPG), 301-304 (NKID), and 330-332 (STA). S182 and T202 together coordinate Mg(2+). One can recognise an OCT domain in the interval 383 to 469 (DEGGSALEFT…ARMVEFDWDP (87 aa)). 2 disordered regions span residues 478 to 509 (LDGSNLGARGKDLRLEEQDPRTHRRSNAERRA) and 528 to 563 (ERKAGHWADPTVDDDRHDENSLFGHGESSEDGETEE). The span at 486–509 (RGKDLRLEEQDPRTHRRSNAERRA) shows a compositional bias: basic and acidic residues.

The protein belongs to the TRAFAC class OBG-HflX-like GTPase superfamily. OBG GTPase family. In terms of assembly, monomer. It depends on Mg(2+) as a cofactor.

The protein localises to the cytoplasm. Its function is as follows. An essential GTPase which binds GTP, GDP and possibly (p)ppGpp with moderate affinity, with high nucleotide exchange rates and a fairly low GTP hydrolysis rate. Plays a role in control of the cell cycle, stress response, ribosome biogenesis and in those bacteria that undergo differentiation, in morphogenesis control. In Bifidobacterium longum subsp. infantis (strain ATCC 15697 / DSM 20088 / JCM 1222 / NCTC 11817 / S12), this protein is GTPase Obg.